We begin with the raw amino-acid sequence, 57 residues long: Lantibiotic nisin-Z (57 aa).

The propeptide occupies 1-23; that stretch reads MSTKDFNLDLVSVSKKDSGASPR. Thr25 is modified (2,3-didehydrobutyrine). The lanthionine (Ser-Cys) cross-link spans 26–30; it reads SISLC. Residue Ser28 is modified to 2,3-didehydroalanine (Ser). Cross-links (beta-methyllanthionine (Thr-Cys)) lie at residues 31–34, 36–42, 46–49, and 48–51; these read TPGC, TGALMGC, TATC, and TCNC. Residue Ser56 is modified to 2,3-didehydroalanine (Ser).

This sequence belongs to the type A lantibiotic family. Maturation of lantibiotics involves the enzymatic conversion of Thr, and Ser into dehydrated AA and the formation of thioether bonds with cysteine. This is followed by membrane translocation and cleavage of the modified precursor. In terms of processing, the structure of the 2,3-didehydrobutyrine is not discussed in PubMed:15361862. It is probably the Z-isomer by similarity.

Lanthionine-containing peptide antibiotic (lantibiotic) active on Gram-positive bacteria. The bactericidal activity of lantibiotics is based on depolarization of energized bacterial cytoplasmic membranes, initiated by the formation of aqueous transmembrane pores. The protein is Lantibiotic nisin-Z (nisZ) of Lactococcus lactis subsp. lactis (Streptococcus lactis).